Reading from the N-terminus, the 328-residue chain is dTDP-3,4-didehydro-2,6-dideoxy-alpha-D-glucose 3-reductase (328 aa).

Substrate is bound at residue arginine 20. NADP(+) is bound by residues 38–39, leucine 75, and histidine 80; that span reads SR. The active-site Proton donor is the lysine 98. 2 residues coordinate NADP(+): arginine 166 and aspartate 178. Substrate-binding residues include tyrosine 236 and threonine 256.

This sequence belongs to the Gfo/Idh/MocA family.

It carries out the reaction dTDP-4-dehydro-2,6-dideoxy-alpha-D-glucose + NADP(+) = dTDP-3,4-didehydro-2,6-dideoxy-alpha-D-glucose + NADPH + H(+). The protein operates within antibiotic biosynthesis. Functionally, involved in the biosynthesis of one of the two 2,6-deoxysugars, dTDP-L-oleandrose, attached to the macrolactone ring oleandolide to produce the aglycone antibiotic oleandomycin. Catalyzes the reduction of the C-3 keto moiety of dTDP-3,4-diketo-2,6-dideoxy-alpha-D-glucose to yield dTDP-4-keto-2,6-dideoxy-alpha-D-glucose. NADPH is the better reductant, however NADH can also be used. The polypeptide is dTDP-3,4-didehydro-2,6-dideoxy-alpha-D-glucose 3-reductase (Streptomyces antibioticus).